Consider the following 566-residue polypeptide: Phosphatidylinositol 4-kinase gamma 4 (566 aa).

Ubiquitin-like domains are found at residues 34–111 (TIMI…SDLQ) and 112–190 (VLDV…AKVR). Polar residues predominate over residues 250–263 (DGLKSGNSPVRSSE). A disordered region spans residues 250–272 (DGLKSGNSPVRSSEGTGGAYFMQ). Positions 255-547 (GNSPVRSSEG…AVLPGTSEAA (293 aa)) constitute a PI3K/PI4K catalytic domain. The G-loop stretch occupies residues 261 to 267 (SSEGTGG). ATP-binding positions include 262-268 (SEGTGGA), Lys-284, and 374-377 (QMFT). The tract at residues 407–415 (ANADRHGGN) is catalytic loop. The activation loop stretch occupies residues 430 to 456 (PIDHGYCLPESFEDCTFEWLYWPQARK). Asp-432 provides a ligand contact to ATP.

Belongs to the PI3/PI4-kinase family. Type II PI4K subfamily. In terms of assembly, interacts with RPN10, UFD1 and CDC48 in vitro. Post-translationally, autophosphorylated.

Its subcellular location is the membrane. The catalysed reaction is a 1,2-diacyl-sn-glycero-3-phospho-(1D-myo-inositol) + ATP = a 1,2-diacyl-sn-glycero-3-phospho-(1D-myo-inositol 4-phosphate) + ADP + H(+). The phosphorylation of phosphatidylinositol (PI) to PI4P is the first committed step in the generation of phosphatidylinositol 4,5-bisphosphate (PIP2), a precursor of the second messenger inositol 1,4,5-trisphosphate (InsP3). Undergoes autophosphorylation and phosphorylates serine/threonine residues of protein substrates. Phosphorylates RPN10 and UFD1 in vitro. In Arabidopsis thaliana (Mouse-ear cress), this protein is Phosphatidylinositol 4-kinase gamma 4.